Here is a 495-residue protein sequence, read N- to C-terminus: Sialin (495 aa).

Over residues 1–18 (MRSPVRDLARNDGEESTD) the composition is skewed to basic and acidic residues. Positions 1–24 (MRSPVRDLARNDGEESTDRTPLLP) are disordered. At 1–41 (MRSPVRDLARNDGEESTDRTPLLPGAPRAEAAPVCCSARYN) the chain is on the cytoplasmic side. A Phosphoserine modification is found at Ser-3. The Dileucine internalization motif signature appears at 22–23 (LL). Residues 42 to 62 (LAILAFFGFFIVYALRVNLSV) form a helical membrane-spanning segment. Over 63–109 (ALVDMVDSNTTLEDNRTSKACPEHSAPIKVHHNQTGKKYQWDAETQG) the chain is Lumenal. Asn-71, Asn-77, and Asn-95 each carry an N-linked (GlcNAc...) asparagine glycan. The chain crosses the membrane as a helical span at residues 110–130 (WILGSFFYGYIITQIPGGYVA). Over 131-136 (SKIGGK) the chain is Cytoplasmic. Residues 137–157 (MLLGFGILGTAVLTLFTPIAA) form a helical membrane-spanning segment. Residue Asp-158 is a topological domain, lumenal. The chain crosses the membrane as a helical span at residues 159-179 (LGVGPLIVLRALEGLGEGVTF). Residues 180-200 (PAMHAMWSSWAPPLERSKLLS) lie on the Cytoplasmic side of the membrane. Residues 201–221 (ISYAGAQLGTVISLPLSGIIC) traverse the membrane as a helical segment. At 222–227 (YYMNWT) the chain is on the lumenal side. The helical transmembrane segment at 228 to 248 (YVFYFFGTIGIFWFLLWIWLV) threads the bilayer. The Cytoplasmic segment spans residues 249 to 279 (SDTPQKHKRISHYEKEYILSSLRNQLSSQKS). Residues 280 to 300 (VPWVPILKSLPLWAIVVAHFS) traverse the membrane as a helical segment. Residues 301–328 (YNWTFYTLLTLLPTYMKEILRFNVQENG) are Lumenal-facing. A helical transmembrane segment spans residues 329–349 (FLSSLPYLGSWLCMILSGQAA). Topologically, residues 350–365 (DNLRAKWNFSTLCVRR) are cytoplasmic. A helical transmembrane segment spans residues 366–386 (IFSLIGMIGPAVFLVAAGFIG). At 387–391 (CDYSL) the chain is on the lumenal side. The helical transmembrane segment at 392–412 (AVAFLTISTTLGGFCSSGFSI) threads the bilayer. At 413-423 (NHLDIAPSYAG) the chain is on the cytoplasmic side. Residues 424 to 444 (ILLGITNTFATIPGMVGPVIA) traverse the membrane as a helical segment. The Lumenal segment spans residues 445-457 (KSLTPDNTVGEWQ). Residues 458 to 478 (TVFYIAAAINVFGAIFFTLFA) form a helical membrane-spanning segment. Over 479–495 (KGEVQNWALNDHHGHRH) the chain is Cytoplasmic.

The protein belongs to the major facilitator superfamily. Sodium/anion cotransporter family. In terms of tissue distribution, in the adult, detected in placenta, kidney and pancreas. Abundant in the endothelial cells of tumors from ovary, colon, breast and lung, but is not detected in endothelial cells from the corresponding normal tissues. Highly expressed in salivary glands and liver, with lower levels of expression in brain, spleen kidney, muscle and pancreas. Expressed in acinar cells of salivary glands (at protein level).

The protein localises to the basolateral cell membrane. It is found in the cytoplasmic vesicle. The protein resides in the secretory vesicle. It localises to the synaptic vesicle membrane. Its subcellular location is the lysosome membrane. The catalysed reaction is N-acetylneuraminate(in) + H(+)(in) = N-acetylneuraminate(out) + H(+)(out). It catalyses the reaction D-glucuronate(out) + H(+)(out) = D-glucuronate(in) + H(+)(in). It carries out the reaction 2 nitrate(out) + H(+)(out) = 2 nitrate(in) + H(+)(in). The enzyme catalyses L-aspartate(out) = L-aspartate(in). The catalysed reaction is L-glutamate(out) = L-glutamate(in). It catalyses the reaction N-acetyl-L-aspartyl-L-glutamate(out) = N-acetyl-L-aspartyl-L-glutamate(in). In terms of biological role, multifunctional anion transporter that operates via two distinct transport mechanisms, namely proton-coupled anion cotransport and membrane potential-dependent anion transport. Electroneutral proton-coupled acidic monosaccharide symporter, with a sugar to proton stoichiometry of 1:1. Exports glucuronic acid and free sialic acid derived from sialoglycoconjugate degradation out of lysosomes, driven by outwardly directed lysosomal pH gradient. May regulate lysosome function and metabolism of sialylated conjugates that impact oligodendrocyte lineage differentiation and myelinogenesis in the central nervous system. Electrogenic proton-coupled nitrate symporter that transports nitrate ions across the basolateral membrane of salivary gland acinar cells, with nitrate to proton stoichiometry of 2:1. May contribute to nitrate clearance from serum by salivary glands, where it is further concentrated and secreted in the saliva. Uses membrane potential to drive the uptake of acidic amino acids and peptides into synaptic vesicles. Responsible for synaptic vesicular storage of L-aspartate and L-glutamate in pinealocytes as well as vesicular uptake of N-acetyl-L-aspartyl-L-glutamate neuropeptide, relevant to aspartegic-associated glutamatergic neurotransmission and activation of metabotropic receptors that inhibit subsequent transmitter release. Its function is as follows. Receptor for CM101, a polysaccharide produced by group B Streptococcus with antipathoangiogenic properties. This Homo sapiens (Human) protein is Sialin (SLC17A5).